Reading from the N-terminus, the 1112-residue chain is Rho GTPase-activating protein 7 (1112 aa).

The 68-residue stretch at 37–104 folds into the SAM domain; that stretch reads LAEIEAKEAC…LNKCAVMKLE (68 aa). Phosphoserine occurs at positions 112, 115, and 155. Disordered regions lie at residues 146-203, 318-350, 405-459, and 512-574; these read SPKQ…APAR, RSIS…RTRS, PKAL…VSSR, and SDEG…GVGA. Polar residues predominate over residues 183–193; that stretch reads VHSTGSLTTHA. Residues 296–468 form a focal adhesion-targeting (FAT) region; that stretch reads QLNCVEISAL…RLSIYDNVPG (173 aa). Low complexity-rich tracts occupy residues 320–348 and 409–423; these read ISSS…VTRT and SNGS…SSVN. Position 343 is a phosphoserine (Ser343). A compositionally biased stretch (basic and acidic residues) spans 437-446; that stretch reads LRRENSSPKE. A compositionally biased stretch (polar residues) spans 520–532; that stretch reads ALDSVSPCPSSPK. The span at 534–544 shows a compositional bias: basic and acidic residues; the sequence is IHLDVDNDRAT. Residues 547–556 show a composition bias toward polar residues; it reads DLDSTGNSLN. Positions 635–657 are polybasic cluster (PBR); the sequence is KHGFSWAVPKFMKRIKVPDYKDR. Residues 662–868 enclose the Rho-GAP domain; that stretch reads VPLTVNVQRT…HMIAECKKLF (207 aa). One can recognise an START domain in the interval 898 to 1105; the sequence is CNDDSADYQH…RDSFSHQNTE (208 aa).

In terms of assembly, interacts with EF1A1, facilitates EF1A1 distribution to the membrane periphery and ruffles upon growth factor stimulation and suppresses cell migration. Interacts with tensin TNS1 (via N-terminus); the interaction is decreased by phosphorylation of TNS1. Interacts with TNS3 and PTEN; in resting cells, interacts with TNS3 (via C2 tensin-type domain) but, following growth factor stimulation, TNS3 and PTEN are phosphorylated which leads to weakened interaction with TNS3 and enhanced interaction with PTEN. Interacts (via C-terminus) with tensin TNS4 (via SH2 domain); the interaction is independent of tyrosine phosphorylation of DLC1.

It is found in the cytoplasm. The protein resides in the cell junction. The protein localises to the focal adhesion. Its subcellular location is the membrane. In terms of biological role, functions as a GTPase-activating protein for the small GTPases RHOA, RHOB, RHOC and CDC42, terminating their downstream signaling. This induces morphological changes and detachment through cytoskeletal reorganization, playing a critical role in biological processes such as cell migration and proliferation. Also functions in vivo as an activator of the phospholipase PLCD1. Active DLC1 increases cell migration velocity but reduces directionality. Required for growth factor-induced epithelial cell migration; in resting cells, interacts with TNS3 while PTEN interacts with the p85 regulatory subunit of the PI3K kinase complex but growth factor stimulation induces phosphorylation of TNS3 and PTEN, causing them to change their binding preference so that PTEN interacts with DLC1 and TNS3 interacts with p85. The PTEN-DLC1 complex translocates to the posterior of migrating cells to activate RHOA while the TNS3-p85 complex translocates to the leading edge of migrating cells to promote RAC1 activation. The chain is Rho GTPase-activating protein 7 (DLC1) from Bos taurus (Bovine).